A 429-amino-acid polypeptide reads, in one-letter code: Alpha-L-rhamnosidase rgxB (429 aa).

The signal sequence occupies residues 1-20 (MAPIALKILLFTSLIVPSIS). Asn-67, Asn-77, Asn-97, Asn-103, Asn-112, Asn-135, and Asn-219 each carry an N-linked (GlcNAc...) asparagine glycan. One copy of the PbH1 1 repeat lies at 217–238 (SKNITLTNWEVVNGDDSISTKA). Asp-231 (proton donor) is an active-site residue. Asn-239, Asn-247, Asn-278, and Asn-344 each carry an N-linked (GlcNAc...) asparagine glycan. PbH1 repeat units lie at residues 240–260 (STDITIANCTFTSGLGIAIGS) and 271–292 (VERLKISNITYEKTTHAVYFKT). A disulfide bridge connects residues Cys-374 and Cys-380. N-linked (GlcNAc...) asparagine glycosylation is found at Asn-387, Asn-395, and Asn-414.

It belongs to the glycosyl hydrolase 28 family.

It localises to the secreted. The catalysed reaction is Hydrolysis of terminal non-reducing alpha-L-rhamnose residues in alpha-L-rhamnosides.. Functionally, alpha-L-rhamnosidase which is able to degrade p-nitrophenyl-alpha-L-rhamnopyranoside (pnp_Rha). The natural substrate of this enzyme has not been identified yet. This chain is Alpha-L-rhamnosidase rgxB (rgxB), found in Aspergillus niger (strain ATCC MYA-4892 / CBS 513.88 / FGSC A1513).